A 464-amino-acid chain; its full sequence is MRAVILAAGLGTRFKSEKPKVLHEILGKPMLWYVITNVRNGRIDDIAVVVGHKAQEVMEAFKNENLKFFIQENPKGGTADAVLAAKDFFSSYEGYVLIINGDSPLVSGETIRNMQQFIHMVRTYEGIKLGGVVLTTHLPDPTGYGRIIKEEGTDRIIRIVEEKDATPEEKAITEINAGTYIFYAPYLLEALYRIKPSPVTGELYLTDVIEYMVNKGYEVRSFMAKEPTEALGVNTRWDLALVENVIKLKIARYWAERGVTVHYPETVWIEPDVSIEPDVEIFPDVMLKGKTKIKKGSVIGKGSVIKDSLVEENVIVREYSVIENSEIKKRAVVGPFARIRNESVIGEEAEIGNFVEVKKSSIGKGVKAKHLAYIGDATVGENTNIGAGTVFANYDGKRKYESYVGKSAFIGSNSLLIAPIRVGDWAYIAGGSVVNKDIPEGALAVSRPELKIFEGRGKKKLQKD.

The interval 1 to 236 (MRAVILAAGL…PTEALGVNTR (236 aa)) is pyrophosphorylase. UDP-N-acetyl-alpha-D-glucosamine contacts are provided by residues 6–9 (LAAG), Lys-20, and 77–78 (GT). Mg(2+) is bound at residue Asp-102. UDP-N-acetyl-alpha-D-glucosamine is bound by residues Gly-145, Glu-161, Asn-176, and Asn-234. Asn-234 serves as a coordination point for Mg(2+). A linker region spans residues 237 to 257 (WDLALVENVIKLKIARYWAER). The tract at residues 258 to 464 (GVTVHYPETV…GRGKKKLQKD (207 aa)) is N-acetyltransferase. UDP-N-acetyl-alpha-D-glucosamine is bound by residues Arg-340 and Lys-358. His-370 (proton acceptor) is an active-site residue. UDP-N-acetyl-alpha-D-glucosamine contacts are provided by Tyr-373 and Asn-384. Residues Ala-387, 393–394 (NY), Ser-412, Gly-430, and Arg-447 each bind acetyl-CoA.

In the N-terminal section; belongs to the N-acetylglucosamine-1-phosphate uridyltransferase family. It in the C-terminal section; belongs to the transferase hexapeptide repeat family. Homotrimer. Requires Mg(2+) as cofactor.

Its subcellular location is the cytoplasm. The enzyme catalyses alpha-D-glucosamine 1-phosphate + acetyl-CoA = N-acetyl-alpha-D-glucosamine 1-phosphate + CoA + H(+). It catalyses the reaction N-acetyl-alpha-D-glucosamine 1-phosphate + UTP + H(+) = UDP-N-acetyl-alpha-D-glucosamine + diphosphate. Its pathway is nucleotide-sugar biosynthesis; UDP-N-acetyl-alpha-D-glucosamine biosynthesis; N-acetyl-alpha-D-glucosamine 1-phosphate from alpha-D-glucosamine 6-phosphate (route II): step 2/2. It participates in nucleotide-sugar biosynthesis; UDP-N-acetyl-alpha-D-glucosamine biosynthesis; UDP-N-acetyl-alpha-D-glucosamine from N-acetyl-alpha-D-glucosamine 1-phosphate: step 1/1. It functions in the pathway bacterial outer membrane biogenesis; LPS lipid A biosynthesis. Functionally, catalyzes the last two sequential reactions in the de novo biosynthetic pathway for UDP-N-acetylglucosamine (UDP-GlcNAc). The C-terminal domain catalyzes the transfer of acetyl group from acetyl coenzyme A to glucosamine-1-phosphate (GlcN-1-P) to produce N-acetylglucosamine-1-phosphate (GlcNAc-1-P), which is converted into UDP-GlcNAc by the transfer of uridine 5-monophosphate (from uridine 5-triphosphate), a reaction catalyzed by the N-terminal domain. The chain is Bifunctional protein GlmU from Aquifex aeolicus (strain VF5).